Consider the following 66-residue polypeptide: Protein translocase subunit SecE (66 aa).

A helical transmembrane segment spans residues 29–49 (LVASTLVVVVAVFIFSPICLV).

It belongs to the SecE/SEC61-gamma family. As to quaternary structure, component of the Sec protein translocase complex. Heterotrimer consisting of SecY, SecE and SecG subunits. The heterotrimers can form oligomers, although 1 heterotrimer is thought to be able to translocate proteins. Interacts with the ribosome. Interacts with SecDF, and other proteins may be involved. Interacts with SecA.

The protein localises to the cell inner membrane. Functionally, essential subunit of the Sec protein translocation channel SecYEG. Clamps together the 2 halves of SecY. May contact the channel plug during translocation. The sequence is that of Protein translocase subunit SecE from Rickettsia montanensis.